Here is a 177-residue protein sequence, read N- to C-terminus: ATP synthase subunit delta (177 aa).

Belongs to the ATPase delta chain family. In terms of assembly, F-type ATPases have 2 components, F(1) - the catalytic core - and F(0) - the membrane proton channel. F(1) has five subunits: alpha(3), beta(3), gamma(1), delta(1), epsilon(1). F(0) has three main subunits: a(1), b(2) and c(10-14). The alpha and beta chains form an alternating ring which encloses part of the gamma chain. F(1) is attached to F(0) by a central stalk formed by the gamma and epsilon chains, while a peripheral stalk is formed by the delta and b chains.

The protein localises to the cell inner membrane. Its function is as follows. F(1)F(0) ATP synthase produces ATP from ADP in the presence of a proton or sodium gradient. F-type ATPases consist of two structural domains, F(1) containing the extramembraneous catalytic core and F(0) containing the membrane proton channel, linked together by a central stalk and a peripheral stalk. During catalysis, ATP synthesis in the catalytic domain of F(1) is coupled via a rotary mechanism of the central stalk subunits to proton translocation. Functionally, this protein is part of the stalk that links CF(0) to CF(1). It either transmits conformational changes from CF(0) to CF(1) or is implicated in proton conduction. The polypeptide is ATP synthase subunit delta (Shewanella halifaxensis (strain HAW-EB4)).